A 140-amino-acid polypeptide reads, in one-letter code: Nucleoside diphosphate kinase (140 aa).

Lys11, Phe59, Arg87, Thr93, Arg104, and Asn114 together coordinate ATP. His117 (pros-phosphohistidine intermediate) is an active-site residue.

It belongs to the NDK family. As to quaternary structure, homotetramer. Mg(2+) is required as a cofactor.

It is found in the cytoplasm. It carries out the reaction a 2'-deoxyribonucleoside 5'-diphosphate + ATP = a 2'-deoxyribonucleoside 5'-triphosphate + ADP. The catalysed reaction is a ribonucleoside 5'-diphosphate + ATP = a ribonucleoside 5'-triphosphate + ADP. Major role in the synthesis of nucleoside triphosphates other than ATP. The ATP gamma phosphate is transferred to the NDP beta phosphate via a ping-pong mechanism, using a phosphorylated active-site intermediate. This chain is Nucleoside diphosphate kinase, found in Maricaulis maris (strain MCS10) (Caulobacter maris).